The following is a 94-amino-acid chain: Integration host factor subunit beta (94 aa).

It belongs to the bacterial histone-like protein family. Heterodimer of an alpha and a beta chain.

In terms of biological role, this protein is one of the two subunits of integration host factor, a specific DNA-binding protein that functions in genetic recombination as well as in transcriptional and translational control. This Mesorhizobium japonicum (strain LMG 29417 / CECT 9101 / MAFF 303099) (Mesorhizobium loti (strain MAFF 303099)) protein is Integration host factor subunit beta.